The primary structure comprises 190 residues: MSATVEEIADDVQDLNVQEFDSDDAGADVHASDKVASRAERKSRKALQGIGLKKVGGITRVTMRRPRGHLYVIAQPEVYKSSHSDVYIVFGEAKAEDMSQLAQAQAAQQMAQAEAQERLLAESLQNSSASGAEKKVEEEEEDDDSPIDEEGVDAKDIDLVMQQVSCSRRKAVKALKESNGDLINAIMNAS.

2 disordered regions span residues 20 to 42 and 123 to 155; these read FDSD…AERK and SLQN…VDAK. Basic and acidic residues predominate over residues 30 to 40; that stretch reads HASDKVASRAE. One can recognise an NAC-A/B domain in the interval 37–102; the sequence is SRAERKSRKA…AKAEDMSQLA (66 aa). The segment covering 138–151 has biased composition (acidic residues); that stretch reads EEEEDDDSPIDEEG. A UBA domain is found at 152 to 189; the sequence is VDAKDIDLVMQQVSCSRRKAVKALKESNGDLINAIMNA.

This sequence belongs to the NAC-alpha family. In terms of assembly, part of the nascent polypeptide-associated complex (NAC), consisting of EGD2 and EGD1. NAC associates with ribosomes via EGD1.

Its subcellular location is the cytoplasm. It is found in the nucleus. Its function is as follows. Component of the nascent polypeptide-associated complex (NAC), a dynamic component of the ribosomal exit tunnel, protecting the emerging polypeptides from interaction with other cytoplasmic proteins to ensure appropriate nascent protein targeting. The NAC complex also promotes mitochondrial protein import by enhancing productive ribosome interactions with the outer mitochondrial membrane and blocks the inappropriate interaction of ribosomes translating non-secretory nascent polypeptides with translocation sites in the membrane of the endoplasmic reticulum. EGD2 may also be involved in transcription regulation. The chain is Nascent polypeptide-associated complex subunit alpha (EGD2) from Mycosarcoma maydis (Corn smut fungus).